We begin with the raw amino-acid sequence, 684 residues long: Nuclear transcription factor Y subunit gamma (684 aa).

Disordered regions lie at residues 1-74 (MENQ…NIST), 112-238 (MNSP…SSFQ), 414-487 (HSPQ…TQQL), and 511-650 (QQQQ…KNDE). Residues 21–49 (SNSHNNHHNNNNNNNYNNNNNNNINNINN) show a composition bias toward low complexity. The segment covering 58 to 74 (KSIQQHSPHSSTPNIST) has biased composition (polar residues). Low complexity predominate over residues 142-162 (HQHPSSASSSSSSSSSSLSSS). Basic residues predominate over residues 163–176 (SHHHHSNHHHHHPN). Residues 188 to 203 (PSLNDSSSNGNGTPAL) show a composition bias toward polar residues. A compositionally biased stretch (low complexity) spans 220–238 (TPTSTPNQRFQSNGSSSFQ). A compositionally biased stretch (polar residues) spans 414-423 (HSPQLQEQSS). The segment covering 424-437 (NNNNNNNNNNNNNN) has biased composition (low complexity). Polar residues-rich tracts occupy residues 438–456 (SVSVKRSYSMEIQNSSPLS) and 464–477 (SQDYNFQYNENNHN). Low complexity-rich tracts occupy residues 478–487 (QSSLSQTQQL), 511–522 (QQQQHSQQISQQ), and 529–637 (PSNS…NNNN).

Belongs to the NFYC/HAP5 subunit family. In terms of assembly, heterotrimeric transcription factor composed of three components, NF-YA, NF-YB and NF-YC. NF-YB and NF-YC must interact and dimerize for NF-YA association and DNA binding.

It is found in the nucleus. Stimulates the transcription of various genes by recognizing and binding to a CCAAT motif in promoters. This chain is Nuclear transcription factor Y subunit gamma (nfyc-1), found in Dictyostelium discoideum (Social amoeba).